The sequence spans 1535 residues: Lysine-specific demethylase 5D (1535 aa).

Residues C14 to P55 enclose the JmjN domain. The region spanning T79–S169 is the ARID domain. The tract at residues P192–I227 is disordered. Residues L197–S210 show a composition bias toward polar residues. Glycyl lysine isopeptide (Lys-Gly) (interchain with G-Cter in SUMO2) cross-links involve residues K205, K229, K244, and K272. Phosphoserine occurs at positions 291 and 307. The segment at S314–A364 adopts a PHD-type 1 zinc-finger fold. Position 430 (Y430) interacts with 2-oxoglutarate. In terms of domain architecture, JmjC spans E458–R624. The Fe cation site is built by H504 and E506. Residues S512, N514, and K522 each coordinate 2-oxoglutarate. H592 provides a ligand contact to Fe cation. Residues C697 to M749 form a C5HC2 zinc finger. The residue at position 884 (S884) is a Phosphoserine. A PHD-type 2 zinc finger spans residues I1174–M1235. S1342 carries the post-translational modification Phosphoserine. The interval H1425 to P1519 is disordered. Residues S1428 to Q1441 are compositionally biased toward basic residues. Basic and acidic residues predominate over residues G1473 to N1487. The segment covering L1490–A1517 has biased composition (polar residues).

It belongs to the JARID1 histone demethylase family. Interacts withPCGF6, MSH5, ZMYND8, AR. The cofactor is L-ascorbate. Fe(2+) serves as cofactor.

It is found in the nucleus. It catalyses the reaction N(6),N(6),N(6)-trimethyl-L-lysyl(4)-[histone H3] + 3 2-oxoglutarate + 3 O2 = L-lysyl(4)-[histone H3] + 3 formaldehyde + 3 succinate + 3 CO2. Functionally, histone demethylase that specifically demethylates 'Lys-4' of histone H3, thereby playing a central role in histone code. Does not demethylate histone H3 'Lys-9', H3 'Lys-27', H3 'Lys-36', H3 'Lys-79' or H4 'Lys-20'. Demethylates trimethylated and dimethylated but not monomethylated H3 'Lys-4'. May play a role in spermatogenesis. Involved in transcriptional repression of diverse metastasis-associated genes; in this function seems to cooperate with ZMYND8. Suppresses prostate cancer cell invasion. Regulates androgen receptor (AR) transcriptional activity by demethylating H3K4me3 active transcription marks. In Pan troglodytes (Chimpanzee), this protein is Lysine-specific demethylase 5D (KDM5D).